Consider the following 375-residue polypeptide: tRNA-specific 2-thiouridylase MnmA (375 aa).

ATP-binding positions include 13–20 (AMSGGVDS) and Met39. Cys111 functions as the Nucleophile in the catalytic mechanism. A disulfide bridge links Cys111 with Cys208. Gly135 serves as a coordination point for ATP. The interval 158–160 (KDQ) is interaction with tRNA. Cys208 (cysteine persulfide intermediate) is an active-site residue. The segment at 313 to 314 (RY) is interaction with tRNA.

This sequence belongs to the MnmA/TRMU family.

The protein localises to the cytoplasm. It catalyses the reaction S-sulfanyl-L-cysteinyl-[protein] + uridine(34) in tRNA + AH2 + ATP = 2-thiouridine(34) in tRNA + L-cysteinyl-[protein] + A + AMP + diphosphate + H(+). Its function is as follows. Catalyzes the 2-thiolation of uridine at the wobble position (U34) of tRNA, leading to the formation of s(2)U34. The sequence is that of tRNA-specific 2-thiouridylase MnmA from Geotalea uraniireducens (strain Rf4) (Geobacter uraniireducens).